A 279-amino-acid polypeptide reads, in one-letter code: 4-diphosphocytidyl-2-C-methyl-D-erythritol kinase (279 aa).

The active site involves lysine 9. Position 93–103 (93–103) interacts with ATP; sequence PMGAGLGGGSS. The active site involves aspartate 135.

The protein belongs to the GHMP kinase family. IspE subfamily.

The enzyme catalyses 4-CDP-2-C-methyl-D-erythritol + ATP = 4-CDP-2-C-methyl-D-erythritol 2-phosphate + ADP + H(+). It functions in the pathway isoprenoid biosynthesis; isopentenyl diphosphate biosynthesis via DXP pathway; isopentenyl diphosphate from 1-deoxy-D-xylulose 5-phosphate: step 3/6. Its function is as follows. Catalyzes the phosphorylation of the position 2 hydroxy group of 4-diphosphocytidyl-2C-methyl-D-erythritol. The chain is 4-diphosphocytidyl-2-C-methyl-D-erythritol kinase from Acinetobacter baylyi (strain ATCC 33305 / BD413 / ADP1).